A 489-amino-acid chain; its full sequence is Rhamnulokinase (489 aa).

13–17 (ASSGR) contacts ATP. Cys68 and Cys222 form a disulfide bridge. Residues Gly83 and 236–238 (HDT) contribute to the substrate site. Asp237 acts as the Proton acceptor in catalysis. Position 259 (Thr259) interacts with ATP. Asn296 serves as a coordination point for substrate. Gln304 contacts ATP. Cys353 and Cys370 are oxidised to a cystine. Residue Gly402 coordinates ATP. The cysteines at positions 413 and 417 are disulfide-linked.

The protein belongs to the rhamnulokinase family. Monomer. The cofactor is Mg(2+).

It carries out the reaction L-rhamnulose + ATP = L-rhamnulose 1-phosphate + ADP + H(+). It participates in carbohydrate degradation; L-rhamnose degradation; glycerone phosphate from L-rhamnose: step 2/3. Functionally, involved in the catabolism of L-rhamnose (6-deoxy-L-mannose). Catalyzes the transfer of the gamma-phosphate group from ATP to the 1-hydroxyl group of L-rhamnulose to yield L-rhamnulose 1-phosphate. This is Rhamnulokinase from Escherichia coli O7:K1 (strain IAI39 / ExPEC).